The sequence spans 141 residues: uncharacterized protein (141 aa).

Helical transmembrane passes span 41–61 (LIML…NYLF) and 95–115 (IIFL…SGFF).

It is found in the cell membrane. This is an uncharacterized protein from Rickettsia prowazekii (strain Madrid E).